The primary structure comprises 396 residues: Elongation factor Tu (396 aa).

One can recognise a tr-type G domain in the interval 11 to 205; it reads KPHVNIGTIG…TVDEYIPTPE (195 aa). Positions 20 to 27 are G1; the sequence is GHVDHGKT. 20–27 provides a ligand contact to GTP; it reads GHVDHGKT. T27 contacts Mg(2+). Residues 61 to 65 are G2; that stretch reads GITIN. The segment at 82–85 is G3; it reads DAPG. GTP is bound by residues 82–86 and 137–140; these read DAPGH and NKVD. A G4 region spans residues 137–140; the sequence is NKVD. Residues 175–177 are G5; the sequence is SAL.

This sequence belongs to the TRAFAC class translation factor GTPase superfamily. Classic translation factor GTPase family. EF-Tu/EF-1A subfamily. In terms of assembly, monomer.

Its subcellular location is the cytoplasm. The enzyme catalyses GTP + H2O = GDP + phosphate + H(+). GTP hydrolase that promotes the GTP-dependent binding of aminoacyl-tRNA to the A-site of ribosomes during protein biosynthesis. This is Elongation factor Tu from Lactobacillus johnsonii (strain CNCM I-12250 / La1 / NCC 533).